The sequence spans 95 residues: Large ribosomal subunit protein bL25 (95 aa).

This sequence belongs to the bacterial ribosomal protein bL25 family. As to quaternary structure, part of the 50S ribosomal subunit; part of the 5S rRNA/L5/L18/L25 subcomplex. Contacts the 5S rRNA. Binds to the 5S rRNA independently of L5 and L18.

This is one of the proteins that binds to the 5S RNA in the ribosome where it forms part of the central protuberance. The chain is Large ribosomal subunit protein bL25 from Shewanella putrefaciens (strain CN-32 / ATCC BAA-453).